The chain runs to 505 residues: Cytochrome P450 9b1 (505 aa).

A heme-binding site is contributed by cysteine 449.

Belongs to the cytochrome P450 family. It depends on heme as a cofactor.

It localises to the endoplasmic reticulum membrane. The protein localises to the microsome membrane. May be involved in the metabolism of insect hormones and in the breakdown of synthetic insecticides. This Drosophila melanogaster (Fruit fly) protein is Cytochrome P450 9b1 (Cyp9b1).